The primary structure comprises 204 residues: Putative t-SNARE coiled-coil homology domain-containing protein L657 (204 aa).

T-SNARE coiled-coil homology domains are found at residues 9–71 and 140–202; these read SDYY…MDHV and DNSR…IKHT. Positions 159 to 181 form a coiled coil; sequence VLEKQANDISNILDEQNNTLEII.

The protein is Putative t-SNARE coiled-coil homology domain-containing protein L657 of Acanthamoeba polyphaga (Amoeba).